A 351-amino-acid polypeptide reads, in one-letter code: Anthranilate phosphoribosyltransferase (351 aa).

5-phospho-alpha-D-ribose 1-diphosphate-binding positions include G80, 83–84 (GD), T88, 90–93 (NIST), 108–116 (KHGNRSVTS), and S120. G80 is a binding site for anthranilate. S92 contributes to the Mg(2+) binding site. Position 111 (N111) interacts with anthranilate. Residue R166 coordinates anthranilate. Mg(2+) is bound by residues D229 and E230.

It belongs to the anthranilate phosphoribosyltransferase family. In terms of assembly, homodimer. The cofactor is Mg(2+).

It catalyses the reaction N-(5-phospho-beta-D-ribosyl)anthranilate + diphosphate = 5-phospho-alpha-D-ribose 1-diphosphate + anthranilate. It participates in amino-acid biosynthesis; L-tryptophan biosynthesis; L-tryptophan from chorismate: step 2/5. Its function is as follows. Catalyzes the transfer of the phosphoribosyl group of 5-phosphorylribose-1-pyrophosphate (PRPP) to anthranilate to yield N-(5'-phosphoribosyl)-anthranilate (PRA). The protein is Anthranilate phosphoribosyltransferase of Chlorobium chlorochromatii (strain CaD3).